A 469-amino-acid chain; its full sequence is Aryl-phospho-beta-D-glucosidase BglH (469 aa).

The active-site Proton donor is the Glu175. The active-site Nucleophile is the Glu368.

This sequence belongs to the glycosyl hydrolase 1 family.

It carries out the reaction 6-phospho-beta-D-glucosyl-(1-&gt;4)-D-glucose + H2O = D-glucose 6-phosphate + D-glucose. Functionally, catalyzes the hydrolysis of aryl-phospho-beta-D-glucosides such as 4-methylumbelliferyl-phospho-beta-D-glucopyranoside (MUG-P), phosphoarbutin and phosphosalicin. Plays a major role in the utilization of arbutin or salicin as the sole carbon source. BglA and BglH are the major proteins contributing to hydrolysis of MUG-P by extracts of late-exponential-phase or stationary-phase B.subtilis cells. In Bacillus subtilis (strain 168), this protein is Aryl-phospho-beta-D-glucosidase BglH (bglH).